A 123-amino-acid chain; its full sequence is MGTKLSVSLEGASTPETAPRVDRPPTFDPQYGFERPRKVREMKATWEEMEQWKLKPAQRDYCAHHLISLMKCQTQNAPFAGHACDGERGAWDKCEYDDHIMRIKEFERERRLLQRQARKEATA.

The segment at 1-32 (MGTKLSVSLEGASTPETAPRVDRPPTFDPQYG) is disordered. The 44-residue stretch at 59–102 (RDYCAHHLISLMKCQTQNAPFAGHACDGERGAWDKCEYDDHIMR) folds into the CHCH domain. Short sequence motifs (cx9C motif) lie at residues 62–72 (CAHHLISLMKC) and 84–94 (CDGERGAWDKC). Disulfide bonds link cysteine 62-cysteine 94 and cysteine 72-cysteine 84.

The protein belongs to the complex I NDUFB7 subunit family. Complex I is composed of 45 different subunits.

It localises to the mitochondrion. The protein resides in the mitochondrion inner membrane. The protein localises to the mitochondrion intermembrane space. Functionally, accessory subunit of the mitochondrial membrane respiratory chain NADH dehydrogenase (Complex I), that is believed not to be involved in catalysis. Complex I functions in the transfer of electrons from NADH to the respiratory chain. The immediate electron acceptor for the enzyme is believed to be ubiquinone. This Caenorhabditis elegans protein is NADH dehydrogenase [ubiquinone] 1 beta subcomplex subunit 7.